The chain runs to 150 residues: Histone H3-like centromeric protein A (150 aa).

The tract at residues 1–55 is disordered; that stretch reads MRPGSTPPSRRKSRPPRRVSPPLPTTSRTSPRRPHAQQQRRASRASPKKRFRPGT. Basic residues predominate over residues 41–53; the sequence is RASRASPKKRFRP. Positions 53 to 150 are H3-like; sequence PGTRALMEIR…RIRGVNEGLG (98 aa).

It belongs to the histone H3 family. Component of centromeric nucleosomes, where DNA is wrapped around a histone octamer core. The octamer contains two molecules each of H2A, H2B, CENPA and H4 assembled in one CENPA-H4 heterotetramer and two H2A-H2B heterodimers. CENPA modulates the DNA-binding characteristics of nucleosomes so that protruding DNA ends have higher flexibility than in nucleosomes containing conventional histone H3.

Its subcellular location is the nucleus. The protein localises to the chromosome. It is found in the centromere. Functionally, histone H3-like nucleosomal protein that is specifically found in centromeric nucleosomes. Replaces conventional H3 in the nucleosome core of centromeric chromatin that serves as an assembly site for the inner kinetochore. The presence of CENPA subtly modifies the nucleosome structure and the way DNA is wrapped around the nucleosome and gives rise to protruding DNA ends that are less well-ordered and rigid compared to nucleosomes containing histone H3. May serve as an epigenetic mark that propagates centromere identity through replication and cell division. Required for recruitment and assembly of kinetochore proteins, and as a consequence required for progress through mitosis, chromosome segregation and cytokinesis. This Xenopus laevis (African clawed frog) protein is Histone H3-like centromeric protein A (cenpa).